A 527-amino-acid chain; its full sequence is Protein PLASTID TRANSCRIPTIONALLY ACTIVE 12, chloroplastic (527 aa).

A chloroplast-targeting transit peptide spans 1-30; that stretch reads MASISTTTWLYRGQVCTDSGKSSNCIVQRR. A PHYA-interacting region 1 (PIR1) region spans residues 1–115; it reads MASISTTTWL…ASIPGEDYWP (115 aa). Residues 89–188 are disordered; sequence SYMDSTSGKL…NDSSDGFVTY (100 aa). The span at 163-181 shows a compositional bias: acidic residues; the sequence is TNDEVSDSEDSSEEEENDS. 2 consecutive short sequence motifs (nuclear localization signal) follow at residues 204–211 and 235–242; these read DKKLGRPH and WRKPEKEQ. Positions 252-352 are PHYA-interacting region 2 (PIR2); that stretch reads DVETVFLKAM…EMFSHQTDRE (101 aa). Acidic residues predominate over residues 458–471; sequence GENDDDEDDADVEK. The tract at residues 458–527 is disordered; it reads GENDDDEDDA…LMDFEEETDP (70 aa). The segment covering 485–504 has biased composition (basic and acidic residues); that stretch reads ETPELRTAKPKPKKEGRMSL. Residues 506–527 are compositionally biased toward acidic residues; the sequence is EAVDDAENLTDFLMDFEEETDP. The short motif at 512-520 is the Required and sufficient for transcriptional transactivation activity and to trigger PIF proteins degradation element; sequence ENLTDFLMD.

Component of the transcriptionally active chromosome (TAC) complexes. Interacts with PTAC14 and PTAC7. Binds directly to PTAC6/PAP8 in the nucleus. Interacts with MED14. Binds to SL1/MTERF3. Binds to photoactivated phytochromes (e.g. PHYA and PHYB) via their photosensory domains; these interactions stimulate its light-mediated accumulation. Associates, via its N-terminal region, with phytochrome-interacting factors (PIFs) including PIF1, PIF3, PIF4, PIF5, PIF6, BHLH72/PIF7, UNE10/PIF8 and PIL1. Binds to RAD4. Associates with MRL7/RCB. Mostly expressed in cotyledons, leaves, stems and flowers, but barely in roots.

Its subcellular location is the plastid. It is found in the chloroplast. It localises to the nucleus. Its function is as follows. Involved in plastid gene expression. Acidic transcriptional coactivator necessary for the transactivation of many PIFs target genes (class B genes), particularly during the regulation of hypocotyl growth. Plays dual opposite roles in regulating hypocotyl growth, preventing it in red and far-red conditions, but promoting it otherwise. Required in the nucleus for the initiation of photomorphogenesis mediated by phytochromes (PHYs) (e.g. PHYA and PHYB) by mediating PHYs localization to photobodies, especially in response to red and far-red light, and implicating phytochrome nuclear bodies as sites of proteolysis for PHYs and PIFs proteins (e.g. PIF1 and PIF3). Acts downstream of PHYs and upstream of DET1. Involved in UV tolerance in both roots and hypocotyls, specifically in dark conditions. Element of a PIF4/HMR/MED14-dependent thermoresponsive process; acts as a PIF4 transcriptional coactivator to trigger the thermoresponsive growth-relevant genes (e.g. mainly involved in biosynthesis and signaling of the phytohormone auxin) and promote warm-temperature-dependent (e.g. 27 degrees Celsius) PIF4 and MED14 stabilization and accumulation, being more prominently involved in long days (LD) and continuous red light (Rc) than in short days (SD), thus modulating warm temperature elicitation of MED14-dependent thermomorphogenesis (e.g. hypocotyl elongation). This is Protein PLASTID TRANSCRIPTIONALLY ACTIVE 12, chloroplastic from Arabidopsis thaliana (Mouse-ear cress).